Reading from the N-terminus, the 211-residue chain is MQKFILSAFVVALVAADCALKCPDGYFSFKRAPSAKNSMTGLWCVKAILSDTLISPNQAKQVCEKDGSILTSFENLDERTKLATVLRDFLSAKKLDRGGMIVDGHRLKNCETDDRTVLNAEPCRNSSTGFTTDEKHTDNTFMWKSWADTEPGQSIFEKQIESCLQLAISQFKSRTELINDVFCNYVKHPQNEGAYDLWNYGAVCGRLPEWN.

Positions 1–16 (MQKFILSAFVVALVAA) are cleaved as a signal peptide.

The polypeptide is C-type lectin domain-containing protein 158 (clec-158) (Caenorhabditis elegans).